A 120-amino-acid polypeptide reads, in one-letter code: NAD(P)H-quinone oxidoreductase subunit 3, chloroplastic (120 aa).

3 helical membrane-spanning segments follow: residues 9–29 (IFWAFLIISSIIPILAFLISG), 64–84 (MFALVFVVFDVETVFLYPWAM), and 88–108 (VLGVSVFIEALIFVLIPIVGL).

It belongs to the complex I subunit 3 family. As to quaternary structure, NDH is composed of at least 16 different subunits, 5 of which are encoded in the nucleus.

Its subcellular location is the plastid. The protein localises to the chloroplast thylakoid membrane. It carries out the reaction a plastoquinone + NADH + (n+1) H(+)(in) = a plastoquinol + NAD(+) + n H(+)(out). The catalysed reaction is a plastoquinone + NADPH + (n+1) H(+)(in) = a plastoquinol + NADP(+) + n H(+)(out). NDH shuttles electrons from NAD(P)H:plastoquinone, via FMN and iron-sulfur (Fe-S) centers, to quinones in the photosynthetic chain and possibly in a chloroplast respiratory chain. The immediate electron acceptor for the enzyme in this species is believed to be plastoquinone. Couples the redox reaction to proton translocation, and thus conserves the redox energy in a proton gradient. In Ceratophyllum demersum (Rigid hornwort), this protein is NAD(P)H-quinone oxidoreductase subunit 3, chloroplastic.